The following is a 122-amino-acid chain: UPF0102 protein CLL_A1253 (122 aa).

It belongs to the UPF0102 family.

The polypeptide is UPF0102 protein CLL_A1253 (Clostridium botulinum (strain Eklund 17B / Type B)).